Reading from the N-terminus, the 506-residue chain is Maturase K (506 aa).

It belongs to the intron maturase 2 family. MatK subfamily.

The protein resides in the plastid. It is found in the chloroplast. Functionally, usually encoded in the trnK tRNA gene intron. Probably assists in splicing its own and other chloroplast group II introns. In Lathyrus aphaca (Yellow vetchling), this protein is Maturase K.